Here is a 357-residue protein sequence, read N- to C-terminus: Queuosine-tRNA galactosyltransferase (357 aa).

Belongs to the glycosyltransferase 2 family.

The protein resides in the cytoplasm. It carries out the reaction queuosine(34) in tRNA(Tyr) + UDP-alpha-D-galactose = O-5''-beta-D-galactosylqueuosine(34) in tRNA(Tyr) + UDP + H(+). In terms of biological role, glycosyltransferase that specifically catalyzes galactosylation of cytoplasmic tRNA(Tyr) modified with queuosine at position 34 (queuosine(34)). Galactosylates the cyclopentene hydroxyl group of queuosine(34) in tRNA(Tyr) to form galactosyl-queuosine(34). Mannosylation of queuosine(34) in tRNA(Tyr) is required to slow-down elongation at cognate codons UAC and suppress stop codon readthrough, thereby regulating protein translation. The chain is Queuosine-tRNA galactosyltransferase from Mus musculus (Mouse).